The following is a 237-amino-acid chain: Large ribosomal subunit protein bL25 (237 aa).

The tract at residues 1-104 is N-terminal domain; the sequence is MELTAKPRTP…SVPVHTTGRS (104 aa). The tract at residues 105 to 189 is middle domain; the sequence is QGEVQGGLVD…ELEAEVQAAQ (85 aa). The tract at residues 190 to 237 is C-terminal domain; that stretch reads VAGLVAAGELSEEAAEAVLEGDASLEEVKAEASEDNAGTDSEDNSDAQ. The disordered stretch occupies residues 205-237; that stretch reads EAVLEGDASLEEVKAEASEDNAGTDSEDNSDAQ.

Belongs to the bacterial ribosomal protein bL25 family. CTC subfamily. Part of the 50S ribosomal subunit. Contacts proteins L11 and L16, the A site tRNA, and the 5S and 23S rRNAs.

In terms of biological role, this is one of 3 proteins that mediate the attachment of the 5S rRNA onto the large ribosomal subunit. This protein has three domains. The N-terminal one is bound on the solvent face, the middle domain fills the space between the 5S rRNA and the L11 arm contacting the 23S rRNA while the C-terminal domain is on the edge of the intersubunit interface and contacts the A site. The protein conformation changes upon binding of a tRNA mimic to the A site, although the mimic does not interact directly with CTC itself, consistent with CTCs presumed role in moderating A site binding. The polypeptide is Large ribosomal subunit protein bL25 (rplY) (Deinococcus radiodurans (strain ATCC 13939 / DSM 20539 / JCM 16871 / CCUG 27074 / LMG 4051 / NBRC 15346 / NCIMB 9279 / VKM B-1422 / R1)).